A 274-amino-acid chain; its full sequence is CTO1 family protein C17G9.12c (274 aa).

Belongs to the CTO1 family.

It is found in the cytoplasm. Its subcellular location is the nucleus. In Schizosaccharomyces pombe (strain 972 / ATCC 24843) (Fission yeast), this protein is CTO1 family protein C17G9.12c.